A 142-amino-acid polypeptide reads, in one-letter code: MYKTIIMPVDVFEMELSDKAIRHAEFLAQQDGVIHLLHVLPGSASMSLHRFAADVRRFEEHLQHEAETRLQTMVGHFSIDPSRIKTHVRFGSVRDVVNEMGEELDADVVVIGSRNPSITTHLLGSNASSVVRHATLPVLVVR.

This sequence belongs to the universal stress protein A family.

The polypeptide is Universal stress protein G (uspG) (Salmonella typhi).